A 591-amino-acid polypeptide reads, in one-letter code: Aspartate--tRNA ligase (591 aa).

An L-aspartate-binding site is contributed by glutamate 176. Positions 200–203 are aspartate; it reads QILK. L-aspartate is bound at residue arginine 222. ATP is bound by residues 222–224 and glutamine 231; that span reads RDE. Histidine 450 provides a ligand contact to L-aspartate. ATP is bound at residue glutamate 484. Arginine 491 is a binding site for L-aspartate. 536 to 539 contributes to the ATP binding site; the sequence is GLDR.

It belongs to the class-II aminoacyl-tRNA synthetase family. Type 1 subfamily. In terms of assembly, homodimer.

It localises to the cytoplasm. The enzyme catalyses tRNA(Asp) + L-aspartate + ATP = L-aspartyl-tRNA(Asp) + AMP + diphosphate. Catalyzes the attachment of L-aspartate to tRNA(Asp) in a two-step reaction: L-aspartate is first activated by ATP to form Asp-AMP and then transferred to the acceptor end of tRNA(Asp). The protein is Aspartate--tRNA ligase of Listeria monocytogenes serotype 4b (strain F2365).